Reading from the N-terminus, the 202-residue chain is Protein FAR-RED ELONGATED HYPOCOTYL 1 (202 aa).

The residue at position 39 (Ser-39) is a Phosphoserine. The Nuclear localization sequence (NLS) motif lies at 40-43; sequence KKRK. The short motif at 54 to 57 is the Nuclear export sequence (NES) element; it reads LLPL. Position 61 is a phosphothreonine (Thr-61).

The protein belongs to the FHY1 protein family. As to quaternary structure, homodimer and heterodimer with FHL. Interacts with underphosphorylated PHYA, especially upon far-red (FR) light illumination. Binds to LAF1 and HFR1. Forms PHYA/FHY1/HFR1 complex in darkness but dissociates from PHYA and HFR1 in response to continuous FR light (FRc). Post-translationally, inactivated by rapid reversible PHYA-mediated phosphorylation at Ser-39 and Thr-61 in red light (R), thus inhibiting PHYA signaling in a negative feedback loop; this ensures the seedling deetiolation process in response to a R-enriched light condition. Subsequent exposure to far-red light (FR) after the R conditions leads to dephosphorylation. The phosphorylated form is cytoplasmic only and unable to bind to chromatin at direct target genes whereas the unphosphorylated form can shuttle from cytoplasm to nucleus. As to expression, expressed in hypocotyl cells of etiolated plants.

The protein localises to the nucleus. The protein resides in the cytoplasm. In terms of biological role, key regulator of far red / red (FR/R) spectrum-specific responses essential for the adaption to changing light conditions (e.g. de-etiolation), essentially by regulating PHYA shuttling from the cytoplasm to the nucleus and by directly regulating the expression of some target genes, depending on light conditions and phosphorylation status. Binds chromatin at target genes promoters, especially in FR light conditions. Can activate transcription of different genes, some being in a phytochrome A (PHYA)-dependent and other in a PHYA-independent manners. Controls specific aspects of plant development, such as the inhibition of seed germination under FR during salt stress. Essential for light-regulated PHYA nuclear accumulation and subsequent PHYA phototropic signaling processes involved in photomorphogenesis. Mediates the association of PHYA with HFR1 and LAF1 in the nucleus in response to FR conditions. PHYA-specific signal transducer in response to continuous FR lights. Contributes to inhibition of hypocotyl elongation in continuous blue light (B). The chain is Protein FAR-RED ELONGATED HYPOCOTYL 1 from Arabidopsis thaliana (Mouse-ear cress).